A 272-amino-acid chain; its full sequence is Putative pyruvate, phosphate dikinase regulatory protein (272 aa).

154–161 (GVSRTSKS) provides a ligand contact to ADP.

It belongs to the pyruvate, phosphate/water dikinase regulatory protein family. PDRP subfamily.

The enzyme catalyses N(tele)-phospho-L-histidyl/L-threonyl-[pyruvate, phosphate dikinase] + ADP = N(tele)-phospho-L-histidyl/O-phospho-L-threonyl-[pyruvate, phosphate dikinase] + AMP + H(+). It catalyses the reaction N(tele)-phospho-L-histidyl/O-phospho-L-threonyl-[pyruvate, phosphate dikinase] + phosphate + H(+) = N(tele)-phospho-L-histidyl/L-threonyl-[pyruvate, phosphate dikinase] + diphosphate. Bifunctional serine/threonine kinase and phosphorylase involved in the regulation of the pyruvate, phosphate dikinase (PPDK) by catalyzing its phosphorylation/dephosphorylation. This Wolbachia sp. subsp. Brugia malayi (strain TRS) protein is Putative pyruvate, phosphate dikinase regulatory protein.